A 555-amino-acid polypeptide reads, in one-letter code: MTRNDPSRTIAAPTGTTLNAKSWQTEAPLRMLMNNLHPDVAERPQELVVYGGIGRAARDWESFDAIVETLKRLDDDQTLLVQSGKPVGVFRTHADAPRVLIANSNLVPRWANWDHFNELDKKGLAMYGQMTAGSWIYIGAQGIVQGTYETFVEMGRQHFGGDLTGKWLFTGGLGGMGGAQPLAAVMAGASCLAVECRKSSIDMRLRTGYLDTWTDNLDEALRLIDESCKAGTPKSVGLLGNVADVLAELLKRGVKPDLLTDQTSAHDPVNGYLPQGWTVEQWDDKRVSAPKEVEKAARASMANHIRAMLGFHALGVPTVDYGNNLRQMALEEGVENAFDFPGFVPAYIRPLFCRGIGPFRWAALSGDPEDIAKTDAKVKELIPDNPHLHRWLDMAAEKIKFQGLPARICWVGLGDRDRLGQAFNEMVANGELKAPVVIGRDHLDSGSVASPNRETEAMADGSDAVSDWPLLNALLNTASGATWVSLHHGGGVGMGFSQHAGMVIVCDGTEAAAKRIGRVLWNDPATGVMRHADAGYEIAIDCAKEKGLDLPGILG.

NAD(+) is bound by residues 51-52 (GG), Gln129, 175-177 (GMG), Glu195, 262-266 (QTSAH), 272-273 (YL), and Tyr321. Residue Cys409 is part of the active site. NAD(+) is bound at residue Gly491.

The protein belongs to the urocanase family. Requires NAD(+) as cofactor.

The protein localises to the cytoplasm. The enzyme catalyses 4-imidazolone-5-propanoate = trans-urocanate + H2O. It functions in the pathway amino-acid degradation; L-histidine degradation into L-glutamate; N-formimidoyl-L-glutamate from L-histidine: step 2/3. Functionally, catalyzes the conversion of urocanate to 4-imidazolone-5-propionate. The polypeptide is Urocanate hydratase (Stenotrophomonas maltophilia (strain R551-3)).